The chain runs to 415 residues: Multifunctional CCA protein (415 aa).

Residues glycine 8 and arginine 11 each coordinate ATP. Residues glycine 8 and arginine 11 each coordinate CTP. The Mg(2+) site is built by glutamate 21 and aspartate 23. ATP contacts are provided by arginine 91, arginine 137, and arginine 140. Residues arginine 91, arginine 137, and arginine 140 each contribute to the CTP site. The 102-residue stretch at 226–327 folds into the HD domain; sequence TGIHTLMTVS…IKLFSAIDVW (102 aa).

The protein belongs to the tRNA nucleotidyltransferase/poly(A) polymerase family. Bacterial CCA-adding enzyme type 1 subfamily. Monomer. Can also form homodimers and oligomers. Mg(2+) serves as cofactor. Requires Ni(2+) as cofactor.

The catalysed reaction is a tRNA precursor + 2 CTP + ATP = a tRNA with a 3' CCA end + 3 diphosphate. It carries out the reaction a tRNA with a 3' CCA end + 2 CTP + ATP = a tRNA with a 3' CCACCA end + 3 diphosphate. Functionally, catalyzes the addition and repair of the essential 3'-terminal CCA sequence in tRNAs without using a nucleic acid template. Adds these three nucleotides in the order of C, C, and A to the tRNA nucleotide-73, using CTP and ATP as substrates and producing inorganic pyrophosphate. tRNA 3'-terminal CCA addition is required both for tRNA processing and repair. Also involved in tRNA surveillance by mediating tandem CCA addition to generate a CCACCA at the 3' terminus of unstable tRNAs. While stable tRNAs receive only 3'-terminal CCA, unstable tRNAs are marked with CCACCA and rapidly degraded. The chain is Multifunctional CCA protein from Sodalis glossinidius (strain morsitans).